The following is a 264-amino-acid chain: 3-methyl-2-oxobutanoate hydroxymethyltransferase (264 aa).

Residues Asp45 and Asp84 each contribute to the Mg(2+) site. 3-methyl-2-oxobutanoate contacts are provided by residues 45 to 46 (DS), Asp84, and Lys112. Glu114 contacts Mg(2+). Catalysis depends on Glu181, which acts as the Proton acceptor.

Belongs to the PanB family. Homodecamer; pentamer of dimers. The cofactor is Mg(2+).

Its subcellular location is the cytoplasm. It carries out the reaction 3-methyl-2-oxobutanoate + (6R)-5,10-methylene-5,6,7,8-tetrahydrofolate + H2O = 2-dehydropantoate + (6S)-5,6,7,8-tetrahydrofolate. The protein operates within cofactor biosynthesis; (R)-pantothenate biosynthesis; (R)-pantoate from 3-methyl-2-oxobutanoate: step 1/2. Functionally, catalyzes the reversible reaction in which hydroxymethyl group from 5,10-methylenetetrahydrofolate is transferred onto alpha-ketoisovalerate to form ketopantoate. The protein is 3-methyl-2-oxobutanoate hydroxymethyltransferase of Vibrio parahaemolyticus serotype O3:K6 (strain RIMD 2210633).